We begin with the raw amino-acid sequence, 1210 residues long: MPRTSRNVRATEVATTAIPPSNAATDTTVDTTVAPTIASADAAQHASNISSSQLGPAGVSDKVPSSVVTNDGDISVTPISENAAQLASSNQPASVIRNPVAAATISIVNPSSLRCQQCGAKFSSMTQLAEHVRTEHRTGAGSLVTSPAINQAIESWLLTWEDLRLLAPTIATDALNKYMGEAVAKAPLLIVEDEGLCTSFLASDTISIAGLQREIVGFTWFMETLQMIPALPEGAVNHPICHTGWASKDSVSRHLDVRLSPPTHGGCFSIHYRTVEGIRQGHAIQPSYFPCQRPHAGPQVRSVQSQDQQVYSVDSGPDPRSRGRYVRFFDNKELFAVAYPGREVLMEANRNALFLDESLPDRVGCIGRAQNVSGDVSAHIDTYELCDDLTLAIREMYHNMLFSMHLDPASVMEIVQDVSQQLVAASIPFAQTDTILCPWAASTPTLQLSQVLNLLNVANNTSAALPLIEAAATLIMGITPLRMEPRILSEAIKRVPETTTIVPSPTGELTRLLKPLGNDYSAIYRCIAGCLYSGLVQMFISADAYPDPTQSITSIPAIWKSLIVMLAAPMTTDPHAAVKAFMSMANLLAQPEPIIIPAPGMTQSTPAVQFSHPEVWPPGFVDPTTLDRNRTPLLHALATMIHAHWPQPGVIQYGRSRLGSANLFLPANQLTYPWPTQPLPRITVGPTYDSAMFRWIDSVFGFYINVVNSRYVATIVGDTTRRTLTGLMAALMQVKTMTPFYIERMCPTEVAVVGGVTVFPPFQVPITRLDPTQVITNVMVSPRGPPAPCRRSRRSHRYYAYAAPIPCQSIPLRLSLLCCVRQTEATLGPSYHYGSAITPMFLSEELFTRNQRAVIASEAFVCARSIIAQCVPDGFQVPRPLQDFNQYNASGSTAADLLKAVDDMFKTAFDIDGSLIEGIGLYGDPRVADLSVAYLRQNGAVERVHTAPDSSFLHEAMQVTSQVMVNEPNLWAIARGDIILAQNATHNNWDPLNPVGLPIFARGGPNVHVVGSRGMIIPQPGGLAPMIRDDAGNPQQIEGDWIYPISVLQVSVANFRDHVWPMIQAGRTRVRIEMGHFLYSIHYHEPFGQITEAPAIDTWLAGISPTGIPPFPLSAPIPQITIPITARRVYFGYCTMNNTGATFSTLGAAIQSAWGTDVTIQRNRWPALIDPNYIPGQSQLPARVQLYNPLRRYNYRYPSLKGMLYIPGVE.

Residues 1–28 form a disordered region; the sequence is MPRTSRNVRATEVATTAIPPSNAATDTT. The segment at 113–136 adopts a C2H2-type zinc-finger fold; it reads LRCQQCGAKFSSMTQLAEHVRTEH. Positions 294–319 are disordered; sequence PHAGPQVRSVQSQDQQVYSVDSGPDP. Residues 299–315 show a composition bias toward low complexity; that stretch reads QVRSVQSQDQQVYSVDS.

The protein belongs to the turreted BTV-fold inner capsid family. As to quaternary structure, homodecamer; each decamer is made up of two conformers of VP2, called VP2A and VP2B. 12 homodecamers assemble to form an icosahedral capsid. Interacts with VP6.

The protein localises to the virion. Its function is as follows. Inner capsid protein that self-assembles to form an icosahedral capsid with a T=2 symmetry, which consists of 120 copies of VP2, with channels at each of its five-fold vertices. This capsid constitutes the innermost concentric layer of the viral mature particle. This chain is Inner capsid protein VP3 (S3), found in Aquareovirus A (isolate Chum salmon/Japan/CSRV/1981) (AQRV-A).